Here is a 194-residue protein sequence, read N- to C-terminus: MSPITILLIGIAMSTDAFAAAIGKGAAIGKPRLRDALYVAVIFGVIETATPIAGWLLGQIASHYIAAFDHWIAFGLLSGLGIHMIINGLKNNGNTCKDNADTHNRNSRWLTLAATALATSIDAAAIGISLAFLDIHIGIVAAVIGLCTFTMVIFGVMLGRVLGTFVGNRAEIVGGIILIIVGSTILYEHLSNTG.

Transmembrane regions (helical) follow at residues 3-23 (PITI…AAIG), 37-57 (LYVA…GWLL), 65-85 (IAAF…IHMI), 112-132 (LAAT…SLAF), 137-157 (IGIV…FGVM), and 170-190 (AEIV…YEHL).

This sequence belongs to the MntP (TC 9.B.29) family.

Its subcellular location is the cell inner membrane. Probably functions as a manganese efflux pump. The protein is Putative manganese efflux pump MntP of Xylella fastidiosa (strain M12).